We begin with the raw amino-acid sequence, 478 residues long: Glycogen synthase (478 aa).

Lys20 provides a ligand contact to ADP-alpha-D-glucose.

It belongs to the glycosyltransferase 1 family. Bacterial/plant glycogen synthase subfamily.

The enzyme catalyses [(1-&gt;4)-alpha-D-glucosyl](n) + ADP-alpha-D-glucose = [(1-&gt;4)-alpha-D-glucosyl](n+1) + ADP + H(+). The protein operates within glycan biosynthesis; glycogen biosynthesis. Synthesizes alpha-1,4-glucan chains using ADP-glucose. The chain is Glycogen synthase from Cereibacter sphaeroides (strain ATCC 17025 / ATH 2.4.3) (Rhodobacter sphaeroides).